The following is a 196-amino-acid chain: Large ribosomal subunit protein uL10 (196 aa).

The interval 163-196 (GAPAAAEAPAAEEAPAAEAAETEAPAEAAATEEN) is disordered. The segment covering 164–196 (APAAAEAPAAEEAPAAEAAETEAPAEAAATEEN) has biased composition (low complexity).

Belongs to the universal ribosomal protein uL10 family. Part of the ribosomal stalk of the 50S ribosomal subunit. The N-terminus interacts with L11 and the large rRNA to form the base of the stalk. The C-terminus forms an elongated spine to which L12 dimers bind in a sequential fashion forming a multimeric L10(L12)X complex.

In terms of biological role, forms part of the ribosomal stalk, playing a central role in the interaction of the ribosome with GTP-bound translation factors. The polypeptide is Large ribosomal subunit protein uL10 (Arthrobacter sp. (strain FB24)).